Here is a 478-residue protein sequence, read N- to C-terminus: 2-(3-amino-3-carboxypropyl)histidine synthase subunit 2 (478 aa).

Residues Cys-93, Cys-114, and Cys-331 each coordinate [4Fe-4S] cluster.

This sequence belongs to the DPH1/DPH2 family. DPH2 subfamily. As to quaternary structure, component of the 2-(3-amino-3-carboxypropyl)histidine synthase complex composed of dph1, dph2, dph3 and a NADH-dependent reductase. The cofactor is [4Fe-4S] cluster.

It functions in the pathway protein modification; peptidyl-diphthamide biosynthesis. In terms of biological role, required for the first step of diphthamide biosynthesis, a post-translational modification of histidine which occurs in elongation factor 2. Dph1 and dph2 transfer a 3-amino-3-carboxypropyl (ACP) group from S-adenosyl-L-methionine (SAM) to a histidine residue, the reaction is assisted by a reduction system comprising dph3 and a NADH-dependent reductase. Facilitates the reduction of the catalytic iron-sulfur cluster found in the dph1 subunit. The polypeptide is 2-(3-amino-3-carboxypropyl)histidine synthase subunit 2 (dph2) (Xenopus laevis (African clawed frog)).